We begin with the raw amino-acid sequence, 607 residues long: MLAGQHHVTDIESPLMVVLWRVAAGVFLPLVPTMAVFGNVLVIMSVFRERSLQTVTNMLIVSLAVSDFMVAIGVMSFGVYYEWNDFKWGLGSFFCHVYQALDVACSTASILNLLAISLDRYIAIGHPISYAQYGARGGRAMISITIVWGVSVAVALPLLLGVNPMEENDLQECELANPYFNMISSIFSFFIPCIAMIILYTIIFRRLRQRERARSLRQAQRSENDKISSALLGGAQIARQMGKHFKNRTDQILLEISFQTSSFPTMSESSEDASTISPMINSFNNFLPKKTPYPSTSIPAIPECGSMPNLTIIERPEAEKEKEISIMDLRDTVEMLDDKYSSAILTSFQTSRSFGEELEEILPFIDGSNSVKHSREQLHTTRSNTSTTRLLDVKPELRSISVPSIQDEKKLSQKSNDLPFSHQNGTHKQKLLPNPGILMKSKSTTLLKTNGYMDTDSLNRNSHKKSLADLLANDEFSFSDSMRVYKNRLFKSLSRATSGWNKPRPSRHMVKKATKQMRREHKATVTLAVVLAVFLFCWLPFFVLHLSNSICLIIDENSACVGFLPLYLATWLGYLNSSLNPLIYTVFDQRFRNAFRNILSCGIFKKR.

Over 1-23 (MLAGQHHVTDIESPLMVVLWRVA) the chain is Extracellular. The chain crosses the membrane as a helical span at residues 24–44 (AGVFLPLVPTMAVFGNVLVIM). Over 45–58 (SVFRERSLQTVTNM) the chain is Cytoplasmic. Residues 59–79 (LIVSLAVSDFMVAIGVMSFGV) form a helical membrane-spanning segment. Topologically, residues 80 to 96 (YYEWNDFKWGLGSFFCH) are extracellular. Cys95 and Cys173 are joined by a disulfide. Residues 97–117 (VYQALDVACSTASILNLLAIS) traverse the membrane as a helical segment. Residues 118–141 (LDRYIAIGHPISYAQYGARGGRAM) are Cytoplasmic-facing. Residues 142–162 (ISITIVWGVSVAVALPLLLGV) form a helical membrane-spanning segment. The Extracellular portion of the chain corresponds to 163–182 (NPMEENDLQECELANPYFNM). Residues 183-203 (ISSIFSFFIPCIAMIILYTII) traverse the membrane as a helical segment. Residues 204–523 (FRRLRQRERA…TKQMRREHKA (320 aa)) lie on the Cytoplasmic side of the membrane. The tract at residues 402-435 (VPSIQDEKKLSQKSNDLPFSHQNGTHKQKLLPNP) is disordered. The segment covering 413-424 (QKSNDLPFSHQN) has biased composition (polar residues). Residues 524–544 (TVTLAVVLAVFLFCWLPFFVL) traverse the membrane as a helical segment. At 545-558 (HLSNSICLIIDENS) the chain is on the extracellular side. The helical transmembrane segment at 559-579 (ACVGFLPLYLATWLGYLNSSL) threads the bilayer. At 580–607 (NPLIYTVFDQRFRNAFRNILSCGIFKKR) the chain is on the cytoplasmic side.

Belongs to the G-protein coupled receptor 1 family. Expressed in the neurons of the head, ventral cord and tail with weak expression observed in body wall muscles and PVD neurons. In the ventral cord, expressed strongly in GABAergic neurons with weaker expression in cholinergic motor neurons. Expressed in cholinergic SIA neurons and octopaminergic RIC neurons. In males, expressed in the dorsal and ventral spicule protractor and retractor muscles, and the sensory post-cloacal sensilla B (PCB) neuron. Expressed in the head acetylcholine neurons. Expressed in the AVA, AVB, AVD and AVE command interneurons. Expressed in premotor interneurons.

It is found in the cell membrane. G-protein coupled receptor which binds to the neurotransmitter dopamine with high affinity leading to the activation of an associated G-protein and downstream signaling pathways. Couples to G-proteins to inhibit adenylate cyclase (AC) activity and cAMP production. Antagonizes the D1-like dopamine receptor dop-1 to negatively regulate the rate of locomotion. Negatively regulates locomotion through the activation of goa-1 subunit proteins which inactivates the unc-77/nca-1 and nca-2 ion-channels in the command interneurons. Inhibits early-stage swimming by modulating the unc-77/nca-1 and nca-2 ion channels of premotor interneurons. In GABAergic, RIC, and SIA neurons, antagonizes the function of dop-1 to play a role in behavioral plasticity and regulate the decision-making process when conflicting alternatives are present. Antagonizes octopamine signaling in response to food by promoting the dopamine-mediated suppression of crh-1/CREB1 transcription factor activation in cholinergic SIA neurons. This is most likely in association with the G(o)-alpha G-protein subunit goa-1. Promotes male mating behavior by antagonizing acetylcholine signaling to control the protrusion of copulatory spicules from the tail of males during hermaphrodite vulval location. Under mitochondria stress, plays a role in bacterial preference, resulting in learned avoidance behavior. The protein is Dopamine receptor 3 of Caenorhabditis elegans.